We begin with the raw amino-acid sequence, 200 residues long: Large ribosomal subunit protein uL4 (200 aa).

The tract at residues 42 to 65 is disordered; the sequence is TRAQKTRSEVSGGGAKPWRQKGTG.

It belongs to the universal ribosomal protein uL4 family. Part of the 50S ribosomal subunit.

Its function is as follows. One of the primary rRNA binding proteins, this protein initially binds near the 5'-end of the 23S rRNA. It is important during the early stages of 50S assembly. It makes multiple contacts with different domains of the 23S rRNA in the assembled 50S subunit and ribosome. In terms of biological role, forms part of the polypeptide exit tunnel. In Vibrio atlanticus (strain LGP32) (Vibrio splendidus (strain Mel32)), this protein is Large ribosomal subunit protein uL4.